Consider the following 282-residue polypeptide: Phosphatidylserine decarboxylase proenzyme (282 aa).

Catalysis depends on charge relay system; for autoendoproteolytic cleavage activity residues Asp-88, His-144, and Ser-247. Ser-247 acts as the Schiff-base intermediate with substrate; via pyruvic acid; for decarboxylase activity in catalysis. Ser-247 carries the post-translational modification Pyruvic acid (Ser); by autocatalysis.

Belongs to the phosphatidylserine decarboxylase family. PSD-B subfamily. Prokaryotic type I sub-subfamily. Heterodimer of a large membrane-associated beta subunit and a small pyruvoyl-containing alpha subunit. Pyruvate is required as a cofactor. Is synthesized initially as an inactive proenzyme. Formation of the active enzyme involves a self-maturation process in which the active site pyruvoyl group is generated from an internal serine residue via an autocatalytic post-translational modification. Two non-identical subunits are generated from the proenzyme in this reaction, and the pyruvate is formed at the N-terminus of the alpha chain, which is derived from the carboxyl end of the proenzyme. The autoendoproteolytic cleavage occurs by a canonical serine protease mechanism, in which the side chain hydroxyl group of the serine supplies its oxygen atom to form the C-terminus of the beta chain, while the remainder of the serine residue undergoes an oxidative deamination to produce ammonia and the pyruvoyl prosthetic group on the alpha chain. During this reaction, the Ser that is part of the protease active site of the proenzyme becomes the pyruvoyl prosthetic group, which constitutes an essential element of the active site of the mature decarboxylase.

The protein localises to the cell membrane. It carries out the reaction a 1,2-diacyl-sn-glycero-3-phospho-L-serine + H(+) = a 1,2-diacyl-sn-glycero-3-phosphoethanolamine + CO2. Its pathway is phospholipid metabolism; phosphatidylethanolamine biosynthesis; phosphatidylethanolamine from CDP-diacylglycerol: step 2/2. Its function is as follows. Catalyzes the formation of phosphatidylethanolamine (PtdEtn) from phosphatidylserine (PtdSer). This chain is Phosphatidylserine decarboxylase proenzyme, found in Xanthomonas campestris pv. campestris (strain B100).